Reading from the N-terminus, the 204-residue chain is ATP phosphoribosyltransferase (204 aa).

This sequence belongs to the ATP phosphoribosyltransferase family. Short subfamily. In terms of assembly, heteromultimer composed of HisG and HisZ subunits.

The protein localises to the cytoplasm. The enzyme catalyses 1-(5-phospho-beta-D-ribosyl)-ATP + diphosphate = 5-phospho-alpha-D-ribose 1-diphosphate + ATP. Its pathway is amino-acid biosynthesis; L-histidine biosynthesis; L-histidine from 5-phospho-alpha-D-ribose 1-diphosphate: step 1/9. Functionally, catalyzes the condensation of ATP and 5-phosphoribose 1-diphosphate to form N'-(5'-phosphoribosyl)-ATP (PR-ATP). Has a crucial role in the pathway because the rate of histidine biosynthesis seems to be controlled primarily by regulation of HisG enzymatic activity. This is ATP phosphoribosyltransferase from Hydrogenobaculum sp. (strain Y04AAS1).